The chain runs to 274 residues: MFEKITEQPSLYDRLEEKSTREILEDINREDRKVAEAVSRTIPMIERLVEQIIPRMEQGGRLFYMGAGTSGRLGVLDASEIPPTFGMPPTFVIGLIAGGDRALRNPVEKAEDNTERGWEELLSHGVNSSDTVIGIAASGTTPYVIGALREARRHGILTGCICSNIESPLAAEADCPIEVIVGPEYVTGSSRMKSGTAQKMILNMISTSIMIRLGRVKGNRMVNMQLSNNKLIDRGTRMLMSEFDLSYEDARTLLLRYGSVRIASESMKQKPPKK.

The SIS domain occupies 52-215 (IIPRMEQGGR…STSIMIRLGR (164 aa)). Glu80 functions as the Proton donor in the catalytic mechanism. Glu111 is an active-site residue.

Belongs to the GCKR-like family. MurNAc-6-P etherase subfamily. In terms of assembly, homodimer.

It catalyses the reaction N-acetyl-D-muramate 6-phosphate + H2O = N-acetyl-D-glucosamine 6-phosphate + (R)-lactate. Its pathway is amino-sugar metabolism; N-acetylmuramate degradation. Specifically catalyzes the cleavage of the D-lactyl ether substituent of MurNAc 6-phosphate, producing GlcNAc 6-phosphate and D-lactate. This Porphyromonas gingivalis (strain ATCC BAA-308 / W83) protein is N-acetylmuramic acid 6-phosphate etherase.